A 250-amino-acid chain; its full sequence is uncharacterized protein (250 aa).

The transit peptide at 1–52 (MALAWCVVRRSASKFASVYGGRVRSISAVANRASLARNPSSIRPFVSRALNY) directs the protein to the mitochondrion. The segment at 124–147 (PSLVSDENDDDDDDDEGPSNESSI) is disordered. Residues 129–141 (DENDDDDDDDEGP) are compositionally biased toward acidic residues.

This sequence belongs to the MAM33 family.

It localises to the mitochondrion matrix. This is an uncharacterized protein from Arabidopsis thaliana (Mouse-ear cress).